The chain runs to 217 residues: MITRAELLDMLASNAPQGFEAQALGLVPIVVETSGRGERSYDIYSRLLKERLVFMVGEVNDQTANLVVAQLLFLESENPDKDISLYINSPGGSVSAGMAIYDTMQFIKPDVSTLCMGLAASMGAFLLASGAKGKRFALPNSRVMIHQPLGGARGQASDIEIQAREILYLKERLNQLLAQHTGQDVERIARDTDRDNFMSSEDAKAYGLIDQVLLKRP.

The active-site Nucleophile is the Ser-121. His-146 is a catalytic residue.

It belongs to the peptidase S14 family. Fourteen ClpP subunits assemble into 2 heptameric rings which stack back to back to give a disk-like structure with a central cavity, resembling the structure of eukaryotic proteasomes.

Its subcellular location is the cytoplasm. The enzyme catalyses Hydrolysis of proteins to small peptides in the presence of ATP and magnesium. alpha-casein is the usual test substrate. In the absence of ATP, only oligopeptides shorter than five residues are hydrolyzed (such as succinyl-Leu-Tyr-|-NHMec, and Leu-Tyr-Leu-|-Tyr-Trp, in which cleavage of the -Tyr-|-Leu- and -Tyr-|-Trp bonds also occurs).. Cleaves peptides in various proteins in a process that requires ATP hydrolysis. Has a chymotrypsin-like activity. Plays a major role in the degradation of misfolded proteins. The chain is ATP-dependent Clp protease proteolytic subunit from Burkholderia lata (strain ATCC 17760 / DSM 23089 / LMG 22485 / NCIMB 9086 / R18194 / 383).